We begin with the raw amino-acid sequence, 381 residues long: Flap endonuclease 1 (381 aa).

The segment at 1–105 is N-domain; sequence MGIKGLNSII…HELDKRTSRR (105 aa). Mg(2+) is bound at residue D34. The DNA site is built by R47 and R71. Mg(2+)-binding residues include D87, E156, E158, D177, and D179. The interval 120–251 is I-domain; sequence EKMKHERRLV…VTALKLMKEH (132 aa). Residue E156 participates in DNA binding. DNA contacts are provided by G229 and D231. Mg(2+) is bound at residue D231. The segment at 338–346 is interaction with PCNA; sequence VQGRLDGFF.

The protein belongs to the XPG/RAD2 endonuclease family. FEN1 subfamily. As to quaternary structure, interacts with PCNA. Three molecules of FEN1 bind to one PCNA trimer with each molecule binding to one PCNA monomer. PCNA stimulates the nuclease activity without altering cleavage specificity. The cofactor is Mg(2+). Post-translationally, phosphorylated. Phosphorylation upon DNA damage induces relocalization to the nuclear plasma.

It is found in the nucleus. Its subcellular location is the nucleolus. The protein resides in the nucleoplasm. The protein localises to the mitochondrion. Functionally, structure-specific nuclease with 5'-flap endonuclease and 5'-3' exonuclease activities involved in DNA replication and repair. During DNA replication, cleaves the 5'-overhanging flap structure that is generated by displacement synthesis when DNA polymerase encounters the 5'-end of a downstream Okazaki fragment. It enters the flap from the 5'-end and then tracks to cleave the flap base, leaving a nick for ligation. Also involved in the long patch base excision repair (LP-BER) pathway, by cleaving within the apurinic/apyrimidinic (AP) site-terminated flap. Acts as a genome stabilization factor that prevents flaps from equilibrating into structures that lead to duplications and deletions. Also possesses 5'-3' exonuclease activity on nicked or gapped double-stranded DNA, and exhibits RNase H activity. Also involved in replication and repair of rDNA and in repairing mitochondrial DNA. This Candida glabrata (strain ATCC 2001 / BCRC 20586 / JCM 3761 / NBRC 0622 / NRRL Y-65 / CBS 138) (Yeast) protein is Flap endonuclease 1.